Here is a 433-residue protein sequence, read N- to C-terminus: uncharacterized protein (433 aa).

One can recognise a Radical SAM core domain in the interval 104–349; it reads ERGRNIIQVR…ELEYKKKGIE (246 aa). 3 residues coordinate [4Fe-4S] cluster: cysteine 118, cysteine 122, and cysteine 125. S-adenosyl-L-methionine-binding positions include 171-172 and 236-238; these read GE and MLS. The 64-residue stretch at 370–433 folds into the TRAM domain; sequence PFKVGEVTKV…KDNIIVAELV (64 aa).

Belongs to the radical SAM superfamily. [4Fe-4S] cluster is required as a cofactor.

This is an uncharacterized protein from Methanocaldococcus jannaschii (strain ATCC 43067 / DSM 2661 / JAL-1 / JCM 10045 / NBRC 100440) (Methanococcus jannaschii).